Consider the following 576-residue polypeptide: Proline--tRNA ligase (576 aa).

It belongs to the class-II aminoacyl-tRNA synthetase family. ProS type 1 subfamily. Homodimer.

Its subcellular location is the cytoplasm. It catalyses the reaction tRNA(Pro) + L-proline + ATP = L-prolyl-tRNA(Pro) + AMP + diphosphate. Its function is as follows. Catalyzes the attachment of proline to tRNA(Pro) in a two-step reaction: proline is first activated by ATP to form Pro-AMP and then transferred to the acceptor end of tRNA(Pro). As ProRS can inadvertently accommodate and process non-cognate amino acids such as alanine and cysteine, to avoid such errors it has two additional distinct editing activities against alanine. One activity is designated as 'pretransfer' editing and involves the tRNA(Pro)-independent hydrolysis of activated Ala-AMP. The other activity is designated 'posttransfer' editing and involves deacylation of mischarged Ala-tRNA(Pro). The misacylated Cys-tRNA(Pro) is not edited by ProRS. The protein is Proline--tRNA ligase of Trichlorobacter lovleyi (strain ATCC BAA-1151 / DSM 17278 / SZ) (Geobacter lovleyi).